We begin with the raw amino-acid sequence, 647 residues long: Dihydrolipoyllysine-residue acetyltransferase component of pyruvate dehydrogenase complex (647 aa).

A mitochondrion-targeting transit peptide spans Met1 to Tyr86. The region spanning His91–Val167 is the Lipoyl-binding 1 domain. A Phosphoserine modification is found at Ser100. Lys132 carries the N6-lipoyllysine modification. Residues Ser184 to Pro216 are disordered. Pro residues predominate over residues Pro187–Thr205. One can recognise a Lipoyl-binding 2 domain in the interval His218–Val294. N6-lipoyllysine is present on Lys259. The interval Val311 to Lys352 is disordered. Positions Pro316–Pro348 are enriched in pro residues. Residues Phe356–Val393 enclose the Peripheral subunit-binding (PSBD) domain. Arg461 provides a ligand contact to CoA. An N6-acetyllysine modification is found at Lys466. Lys473 is subject to N6-succinyllysine. Ser475 contributes to the CoA binding site. N6-succinyllysine is present on Lys547. 3 residues coordinate CoA: Ser566, Asn567, and Gly591. Active-site residues include His620 and Asp624.

Belongs to the 2-oxoacid dehydrogenase family. In terms of assembly, part of the pyruvate dehydrogenase complex (PDHc) that is a multi-enzyme complex composed of multiple copies of three enzymes, pyruvate dehydrogenase (subunits PDH1A and PDHB, E1 component), dihydrolipoamide acetyltransferase (DLAT, E2 component), and dihydrolipoamide dehydrogenase (DLD, E3 component) to which is added an additional protein the E3-binding protein (PDHX, E3BP). In terms of structural architecture, the E2 and E3BP components assemble into a 60meric central core with icosahedral symmetry. The central core is decorated with E1 and E3 proteins. Currently, two alternative models for the E2:E3BP stoichiometry are considered as being either 48:12 (E2(48)-E3BP(12)) or 40:20 (E2(40)-E3BP(20)). Interacts with PDK2 and PDK3. Interacts with SIRT4. Interacts with PDHB. (R)-lipoate serves as cofactor. Post-translationally, delipoylated at Lys-132 and Lys-259 by SIRT4, delipoylation decreases the PHD complex activity.

Its subcellular location is the mitochondrion matrix. The enzyme catalyses N(6)-[(R)-dihydrolipoyl]-L-lysyl-[protein] + acetyl-CoA = N(6)-[(R)-S(8)-acetyldihydrolipoyl]-L-lysyl-[protein] + CoA. In terms of biological role, as part of the pyruvate dehydrogenase complex, catalyzes the transfers of an acetyl group to a lipoic acid moiety. The pyruvate dehydrogenase complex, catalyzes the overall conversion of pyruvate to acetyl-CoA and CO(2), and thereby links cytoplasmic glycolysis and the mitochondrial tricarboxylic acid (TCA) cycle. The protein is Dihydrolipoyllysine-residue acetyltransferase component of pyruvate dehydrogenase complex of Bos taurus (Bovine).